The primary structure comprises 500 residues: MQMNSVWKLSLGLLLLSSVIGSFAELDFGHCETLVKKWADSSSSREEHVNKDKRSLKDLLFFLHVPRTGGRTYFHCFLRKLYDSSEECPRSYDKLHFNPRKEKCKLLATHDDYSLMAKLPRERTSVMTIVRDPIARVLSTYEFSVEVAARFLVHPNLTSASRMSSRIRKSNVISTLDIWPWKYLVPWMREDLFARRDARKLKEVVIIEDDNPYDMEEMLMPLHKYLDAPTAHDIIHNGATFQIAGLTNNSHLSEAHEVRHCVQKFKSLGESVLQVAKRRLDSMLYVGLTEEHRESASLFANVVGSQVLSQVVPSNATAKIKALKSEASVTISETGSDKSNIQNGTSEVTLNKAEAKSGNMTVKTLMEVYEGCITHLRKSQGTRRVNSLKRITPANFTRGTRTRVPKEVIQQIKSLNNLDVELYKYAKVIFAKEHELVSNKLISSSKRSIVDLPSELKSVLGEMGEEKLWKFVPVALMLLLIVLFFLFVNAKRRRTSKVKI.

An N-terminal signal peptide occupies residues Met1 to Ala24. Topologically, residues Glu25–Lys467 are lumenal. Residues Arg121 and Glu142 contribute to the active site. N-linked (GlcNAc...) asparagine glycans are attached at residues Asn156, Asn248, Asn315, Asn343, Asn359, and Asn395. The helical transmembrane segment at Leu468 to Val488 threads the bilayer. Residues Asn489–Ile500 are Cytoplasmic-facing.

In terms of tissue distribution, expressed throughout the plant body, highest levels of expression are in the root apical meristem.

The protein resides in the golgi apparatus membrane. It catalyses the reaction L-tyrosyl-[protein] + 3'-phosphoadenylyl sulfate = O-sulfo-L-tyrosine-[protein] + adenosine 3',5'-bisphosphate + H(+). Functionally, catalyzes the O-sulfation of tyrosine residues within acidic motifs of polypeptides. The sequence is that of Protein-tyrosine sulfotransferase (TPST) from Arabidopsis thaliana (Mouse-ear cress).